A 228-amino-acid polypeptide reads, in one-letter code: tRNA (guanine-N(1)-)-methyltransferase (228 aa).

Residues glycine 111 and 130-135 contribute to the S-adenosyl-L-methionine site; that span reads IGDFVL.

The protein belongs to the RNA methyltransferase TrmD family. In terms of assembly, homodimer.

The protein localises to the cytoplasm. The catalysed reaction is guanosine(37) in tRNA + S-adenosyl-L-methionine = N(1)-methylguanosine(37) in tRNA + S-adenosyl-L-homocysteine + H(+). In terms of biological role, specifically methylates guanosine-37 in various tRNAs. The polypeptide is tRNA (guanine-N(1)-)-methyltransferase (Ureaplasma urealyticum serovar 10 (strain ATCC 33699 / Western)).